A 235-amino-acid polypeptide reads, in one-letter code: Protein YIP4 (235 aa).

Transmembrane regions (helical) follow at residues Ile89–Val109, Ser114–Leu134, Leu145–Val165, Val186–Val206, and Ile215–Leu235.

Belongs to the YIP1 family. As to quaternary structure, interacts with TVP18, TVP23, YIP1 and YIP5. Interacts with SEC4, YPT1, YPT6, YPT7, YPT10, YPT11, YPT31, YPT32 and YPT52; These proteins are all Rab GTPases.

It is found in the golgi apparatus membrane. Its function is as follows. May be involved in proper membrane localization of Rab GTPases. The sequence is that of Protein YIP4 (YIP4) from Saccharomyces cerevisiae (strain ATCC 204508 / S288c) (Baker's yeast).